Consider the following 736-residue polypeptide: Catalase-peroxidase (736 aa).

A disordered region spans residues 1–30; the sequence is MGGNVMTDDKMNSVTSGANKQETGRDMSNR. Over residues 12-21 the composition is skewed to polar residues; that stretch reads NSVTSGANKQ. The segment at residues 101–224 is a cross-link (tryptophyl-tyrosyl-methioninium (Trp-Tyr) (with M-250)); sequence WHSAGTYRAG…LAAVQMGLIY (124 aa). His-102 functions as the Proton acceptor in the catalytic mechanism. Residues 224–250 constitute a cross-link (tryptophyl-tyrosyl-methioninium (Tyr-Met) (with W-101)); the sequence is YVNPEGPNGNPDPIAAAKDIREVFARM. His-265 is a heme b binding site. The segment at 351-373 is disordered; the sequence is KGGAGAGTIPDAHDPSKRHAPSM.

It belongs to the peroxidase family. Peroxidase/catalase subfamily. In terms of assembly, homodimer or homotetramer. Heme b serves as cofactor. Post-translationally, formation of the three residue Trp-Tyr-Met cross-link is important for the catalase, but not the peroxidase activity of the enzyme.

The enzyme catalyses H2O2 + AH2 = A + 2 H2O. It catalyses the reaction 2 H2O2 = O2 + 2 H2O. Bifunctional enzyme with both catalase and broad-spectrum peroxidase activity. This is Catalase-peroxidase from Methanosarcina acetivorans (strain ATCC 35395 / DSM 2834 / JCM 12185 / C2A).